The chain runs to 696 residues: Macrolide export ATP-binding/permease protein MacB (696 aa).

Positions 6–244 (IELKNIERYH…KPQNKRTFID (239 aa)) constitute an ABC transporter domain. 42–49 (GASGSGKS) is a binding site for ATP. Residues 254–287 (HNTEKLNRPNEKNNIDNDNKENNNGYNRNDNSFL) form a disordered region. Residues 255 to 274 (NTEKLNRPNEKNNIDNDNKE) show a composition bias toward basic and acidic residues. The span at 275 to 284 (NNNGYNRNDN) shows a compositional bias: low complexity. The next 4 membrane-spanning stretches (helical) occupy residues 324 to 344 (FLTM…IALG), 576 to 596 (IAFI…LVSV), 626 to 646 (MVSL…GGLF), and 659 to 679 (LSSF…FGYF).

The protein belongs to the ABC transporter superfamily. Macrolide exporter (TC 3.A.1.122) family. In terms of assembly, homodimer. Part of the tripartite efflux system MacAB-TolC, which is composed of an inner membrane transporter, MacB, a periplasmic membrane fusion protein, MacA, and an outer membrane component, TolC. The complex forms a large protein conduit and can translocate molecules across both the inner and outer membranes. Interacts with MacA.

Its subcellular location is the cell inner membrane. Functionally, part of the tripartite efflux system MacAB-TolC. MacB is a non-canonical ABC transporter that contains transmembrane domains (TMD), which form a pore in the inner membrane, and an ATP-binding domain (NBD), which is responsible for energy generation. Confers resistance against macrolides. This Haemophilus ducreyi (strain 35000HP / ATCC 700724) protein is Macrolide export ATP-binding/permease protein MacB.